A 165-amino-acid chain; its full sequence is uncharacterized protein (165 aa).

The N-terminal stretch at 1–17 (MIRGFFLILLFLLLAFF) is a signal peptide.

This is an uncharacterized protein from Aquifex aeolicus (strain VF5).